The chain runs to 284 residues: Ubiquitin thioesterase otubain-like (284 aa).

Residues Gly77–Lys274 enclose the OTU domain. The active site involves Asp85. The active-site Nucleophile is Cys88. Ile176 contacts substrate. Residues His245 and His267 contribute to the active site.

This sequence belongs to the peptidase C65 family.

The catalysed reaction is Thiol-dependent hydrolysis of ester, thioester, amide, peptide and isopeptide bonds formed by the C-terminal Gly of ubiquitin (a 76-residue protein attached to proteins as an intracellular targeting signal).. Its function is as follows. Hydrolase that can remove conjugated ubiquitin from proteins and plays an important regulatory role at the level of protein turnover by preventing degradation. Specifically cleaves 'Lys-48'-linked polyubiquitin. The protein is Ubiquitin thioesterase otubain-like (otub-1) of Caenorhabditis elegans.